A 426-amino-acid chain; its full sequence is Histidine--tRNA ligase (426 aa).

This sequence belongs to the class-II aminoacyl-tRNA synthetase family.

The protein resides in the cytoplasm. The enzyme catalyses tRNA(His) + L-histidine + ATP = L-histidyl-tRNA(His) + AMP + diphosphate + H(+). This chain is Histidine--tRNA ligase, found in Saccharolobus solfataricus (strain ATCC 35092 / DSM 1617 / JCM 11322 / P2) (Sulfolobus solfataricus).